The primary structure comprises 440 residues: Xylose isomerase (440 aa).

Residues His101 and Asp104 contribute to the active site. Residues Glu232, Glu268, His271, Asp296, Asp307, Asp309, and Asp339 each coordinate Mg(2+).

The protein belongs to the xylose isomerase family. Homotetramer. The cofactor is Mg(2+).

The protein localises to the cytoplasm. It catalyses the reaction alpha-D-xylose = alpha-D-xylulofuranose. The protein is Xylose isomerase of Escherichia coli O17:K52:H18 (strain UMN026 / ExPEC).